Reading from the N-terminus, the 332-residue chain is Anthranilate phosphoribosyltransferase (332 aa).

5-phospho-alpha-D-ribose 1-diphosphate contacts are provided by residues glycine 79, 82–83 (GD), serine 87, 89–92 (NIST), 107–115 (KHGNRSVSS), and serine 119. Glycine 79 serves as a coordination point for anthranilate. Serine 91 is a binding site for Mg(2+). Asparagine 110 contacts anthranilate. Residue arginine 165 participates in anthranilate binding. Positions 223 and 224 each coordinate Mg(2+).

This sequence belongs to the anthranilate phosphoribosyltransferase family. In terms of assembly, homodimer. The cofactor is Mg(2+).

It catalyses the reaction N-(5-phospho-beta-D-ribosyl)anthranilate + diphosphate = 5-phospho-alpha-D-ribose 1-diphosphate + anthranilate. It participates in amino-acid biosynthesis; L-tryptophan biosynthesis; L-tryptophan from chorismate: step 2/5. Catalyzes the transfer of the phosphoribosyl group of 5-phosphorylribose-1-pyrophosphate (PRPP) to anthranilate to yield N-(5'-phosphoribosyl)-anthranilate (PRA). The sequence is that of Anthranilate phosphoribosyltransferase from Sodalis glossinidius (strain morsitans).